The primary structure comprises 280 residues: Succinate dehydrogenase [ubiquinone] iron-sulfur subunit, mitochondrial (280 aa).

Residues 1 to 25 (MAAVCFSLSRCCSAVHRPAVTAVRF) constitute a mitochondrion transit peptide. In terms of domain architecture, 2Fe-2S ferredoxin-type spans 39–129 (KKFQIYRWDP…TSKVTKIYPL (91 aa)). Residues cysteine 92, cysteine 97, cysteine 100, and cysteine 112 each contribute to the [2Fe-2S] cluster site. The region spanning 175–205 (DRQKLDGLYECILCACCSTSCPSYWWNADKY) is the 4Fe-4S ferredoxin-type domain. [4Fe-4S] cluster-binding residues include cysteine 185, cysteine 188, and cysteine 191. Cysteine 195 is a binding site for [3Fe-4S] cluster. Residue tryptophan 200 participates in a ubiquinone binding. [3Fe-4S] cluster is bound by residues cysteine 242 and cysteine 248. Cysteine 252 contacts [4Fe-4S] cluster.

The protein belongs to the succinate dehydrogenase/fumarate reductase iron-sulfur protein family. In terms of assembly, component of complex II composed of four subunits: the flavoprotein (FP) sdha, iron-sulfur protein (IP) sdhb, and a cytochrome b composed of sdhc and sdhd. [2Fe-2S] cluster serves as cofactor. It depends on [3Fe-4S] cluster as a cofactor. Requires [4Fe-4S] cluster as cofactor.

The protein resides in the mitochondrion inner membrane. The catalysed reaction is a quinone + succinate = fumarate + a quinol. The enzyme catalyses (R)-malate + a quinone = enol-oxaloacetate + a quinol. It carries out the reaction (S)-malate + a quinone = enol-oxaloacetate + a quinol. It participates in carbohydrate metabolism; tricarboxylic acid cycle; fumarate from succinate (eukaryal route): step 1/1. Its activity is regulated as follows. Enol-oxaloacetate inhibits the succinate dehydrogenase activity. Its function is as follows. Iron-sulfur protein (IP) subunit of the succinate dehydrogenase complex (mitochondrial respiratory chain complex II), responsible for transferring electrons from succinate to ubiquinone (coenzyme Q). SDH also oxidizes malate to the non-canonical enol form of oxaloacetate, enol-oxaloacetate. Enol-oxaloacetate, which is a potent inhibitor of the succinate dehydrogenase activity, is further isomerized into keto-oxaloacetate. In Danio rerio (Zebrafish), this protein is Succinate dehydrogenase [ubiquinone] iron-sulfur subunit, mitochondrial (sdhb).